The primary structure comprises 179 residues: ATP synthase subunit delta (179 aa).

This sequence belongs to the ATPase delta chain family. In terms of assembly, F-type ATPases have 2 components, F(1) - the catalytic core - and F(0) - the membrane proton channel. F(1) has five subunits: alpha(3), beta(3), gamma(1), delta(1), epsilon(1). F(0) has three main subunits: a(1), b(2) and c(10-14). The alpha and beta chains form an alternating ring which encloses part of the gamma chain. F(1) is attached to F(0) by a central stalk formed by the gamma and epsilon chains, while a peripheral stalk is formed by the delta and b chains.

The protein resides in the cell membrane. In terms of biological role, f(1)F(0) ATP synthase produces ATP from ADP in the presence of a proton or sodium gradient. F-type ATPases consist of two structural domains, F(1) containing the extramembraneous catalytic core and F(0) containing the membrane proton channel, linked together by a central stalk and a peripheral stalk. During catalysis, ATP synthesis in the catalytic domain of F(1) is coupled via a rotary mechanism of the central stalk subunits to proton translocation. Functionally, this protein is part of the stalk that links CF(0) to CF(1). It either transmits conformational changes from CF(0) to CF(1) or is implicated in proton conduction. The polypeptide is ATP synthase subunit delta (Listeria monocytogenes serotype 4b (strain CLIP80459)).